A 217-amino-acid polypeptide reads, in one-letter code: Ribosome maturation factor RimM (217 aa).

Positions 115-186 (EDAWYDNQLV…TVTLTPPPGL (72 aa)) constitute a PRC barrel domain. Residues 181 to 217 (TPPPGLFEDLPDDAPAAGDESEPVSPPVTAEETPGGE) form a disordered region.

Belongs to the RimM family. Binds ribosomal protein uS19.

It is found in the cytoplasm. In terms of biological role, an accessory protein needed during the final step in the assembly of 30S ribosomal subunit, possibly for assembly of the head region. Essential for efficient processing of 16S rRNA. May be needed both before and after RbfA during the maturation of 16S rRNA. It has affinity for free ribosomal 30S subunits but not for 70S ribosomes. The chain is Ribosome maturation factor RimM from Leifsonia xyli subsp. xyli (strain CTCB07).